The sequence spans 159 residues: Probable minor fimbrial protein (159 aa).

A propeptide spans 1–6 (MKKMHG) (leader sequence). Phenylalanine 7 is modified (N-methylphenylalanine). Residues 7-27 (FTLIELMIVVAIIGVLASTAL) form a helical membrane-spanning segment. Cystine bridges form between cysteine 56–cysteine 71 and cysteine 140–cysteine 153.

Belongs to the N-Me-Phe pilin family. In terms of assembly, the pili are polar flexible filaments of about 5.4 nanometers diameter and 2.5 micrometers average length; they consist of only a single polypeptide chain arranged in a helical configuration of five subunits per turn in the assembled pilus.

The protein resides in the fimbrium. Its subcellular location is the membrane. In Dichelobacter nodosus (Bacteroides nodosus), this protein is Probable minor fimbrial protein (fimZ).